The sequence spans 424 residues: UDP-N-acetylglucosamine 1-carboxyvinyltransferase (424 aa).

Position 22-23 (22-23) interacts with phosphoenolpyruvate; sequence KN. Arg93 lines the UDP-N-acetyl-alpha-D-glucosamine pocket. The active-site Proton donor is Cys117. Cys117 is modified (2-(S-cysteinyl)pyruvic acid O-phosphothioketal). Residues 122–126, Asp307, and Val329 contribute to the UDP-N-acetyl-alpha-D-glucosamine site; that span reads RPIDL.

Belongs to the EPSP synthase family. MurA subfamily.

It localises to the cytoplasm. The catalysed reaction is phosphoenolpyruvate + UDP-N-acetyl-alpha-D-glucosamine = UDP-N-acetyl-3-O-(1-carboxyvinyl)-alpha-D-glucosamine + phosphate. It participates in cell wall biogenesis; peptidoglycan biosynthesis. In terms of biological role, cell wall formation. Adds enolpyruvyl to UDP-N-acetylglucosamine. The protein is UDP-N-acetylglucosamine 1-carboxyvinyltransferase of Chlorobium luteolum (strain DSM 273 / BCRC 81028 / 2530) (Pelodictyon luteolum).